The chain runs to 2144 residues: Reducing polyketide synthase PKS2 (2144 aa).

Residues 10–436 (PMPLAIIGMS…GSNSHCIVRA (427 aa)) enclose the Ketosynthase family 3 (KS3) domain. Catalysis depends on for beta-ketoacyl synthase activity residues cysteine 183, histidine 319, and histidine 360. A malonyl-CoA:ACP transacylase (MAT) region spans residues 538–855 (VFAFTGQGAQ…VPSLHRGQNA (318 aa)). The segment at 924 to 1058 (HDLLGSINSS…ALVKCEATTD (135 aa)) is N-terminal hotdog fold. Residues 924-1214 (HDLLGSINSS…RSYSIDGTTD (291 aa)) form a dehydratase (DH) domain region. Residues 924–1237 (HDLLGSINSS…LAVEATLAPQ (314 aa)) enclose the PKS/mFAS DH domain. A C-terminal hotdog fold region spans residues 1076-1237 (HSCVGSPLLY…LAVEATLAPQ (162 aa)). The segment at 1461–1747 (GMPDSLYLQR…SETDSKKLLL (287 aa)) is enoyl reductase (ER) domain. Residues 1771-1948 (AVYLLVGGSG…PATSLALTAV (178 aa)) form a ketoreductase (KR) domain region. Positions 2059 to 2136 (EATQLLLAAI…KIVDSVIVKR (78 aa)) constitute a Carrier domain. O-(pantetheine 4'-phosphoryl)serine is present on serine 2096.

It functions in the pathway mycotoxin biosynthesis. Functionally, reducing polyketide synthase (PKS); part of the Tox1A locus, one of the 2 loci that mediate the biosynthesis of T-toxin, a family of linear polyketides 37 to 45 carbons in length, of which the major component is 41 carbons, and which leads to high virulence to maize. One of the PKSs (PKS1 or PKS2) could synthesize a precursor, used subsequently by the other PKS as starter unit, to add additional carbons. Variability in the length of the final carbon backbone C35-47 could be achieved by varying the number of condensation cycles, or use of different starter or extender units or might be due to decarboxylation of the penultimate product, catalyzed by DEC1. Additional proteins are required for the biosynthesis of T-toxin, including oxidoreductases RED1, RED2, RED3, LAM1 and OXI1, as well as esterase TOX9. The polypeptide is Reducing polyketide synthase PKS2 (Cochliobolus heterostrophus (strain C4 / ATCC 48331 / race T) (Southern corn leaf blight fungus)).